Here is a 1485-residue protein sequence, read N- to C-terminus: Chromosome partition protein MukB (1485 aa).

34–41 contacts ATP; that stretch reads GGNGAGKS. Coiled-coil stretches lie at residues 337–480, 509–605, 780–805, 835–915, 977–1116, and 1210–1235; these read LNLV…QAYQ, QHLA…PVWL, RAAR…ATLS, EAEI…IQQH, GMLT…AKAG, and EAIE…KLAI. The segment at 666–783 is flexible hinge; sequence PSGAEDARLI…EVPLFGRAAR (118 aa).

The protein belongs to the SMC family. MukB subfamily. Homodimerization via its hinge domain. Binds to DNA via its C-terminal region. Interacts, and probably forms a ternary complex, with MukE and MukF via its C-terminal region. The complex formation is stimulated by calcium or magnesium. Interacts with tubulin-related protein FtsZ.

Its subcellular location is the cytoplasm. It localises to the nucleoid. Its function is as follows. Plays a central role in chromosome condensation, segregation and cell cycle progression. Functions as a homodimer, which is essential for chromosome partition. Involved in negative DNA supercoiling in vivo, and by this means organize and compact chromosomes. May achieve or facilitate chromosome segregation by condensation DNA from both sides of a centrally located replisome during cell division. The protein is Chromosome partition protein MukB of Yersinia pseudotuberculosis serotype O:1b (strain IP 31758).